Here is a 297-residue protein sequence, read N- to C-terminus: Diaminopimelate epimerase (297 aa).

Residues Asn13, Gln46, and Asn66 each contribute to the substrate site. The active-site Proton donor is Cys76. Substrate contacts are provided by residues 77–78 (GN), Asn174, Asn207, and 225–226 (ER). The Proton acceptor role is filled by Cys234. 235–236 (GT) contacts substrate.

It belongs to the diaminopimelate epimerase family. Homodimer.

It is found in the cytoplasm. The catalysed reaction is (2S,6S)-2,6-diaminopimelate = meso-2,6-diaminopimelate. Its pathway is amino-acid biosynthesis; L-lysine biosynthesis via DAP pathway; DL-2,6-diaminopimelate from LL-2,6-diaminopimelate: step 1/1. Catalyzes the stereoinversion of LL-2,6-diaminopimelate (L,L-DAP) to meso-diaminopimelate (meso-DAP), a precursor of L-lysine and an essential component of the bacterial peptidoglycan. This Leptothrix cholodnii (strain ATCC 51168 / LMG 8142 / SP-6) (Leptothrix discophora (strain SP-6)) protein is Diaminopimelate epimerase.